The chain runs to 784 residues: Cadherin-5 (784 aa).

The N-terminal stretch at 1–25 (MQRLMMLLATSGACLGLLAVAAVAA) is a signal peptide. Residues 26 to 47 (AGANPAQRDTHSLLPTHRRQKR) constitute a propeptide that is removed on maturation. Cadherin domains follow at residues 48–151 (DWIW…WPVF), 152–258 (THRL…FPFF), 259–372 (TQTK…PPIF), 373–477 (QQPF…DNAP), and 478–593 (EFAK…MAAQ). At 48–599 (DWIWNQMHID…MAAQVGVSIQ (552 aa)) the chain is on the extracellular side. Ca(2+) contacts are provided by Glu58 and Glu59. Asn61 carries N-linked (GlcNAc...) (complex) asparagine glycosylation. Ca(2+) is bound by residues Asp109 and Glu111. A glycan (N-linked (GlcNAc...) (complex) asparagine) is linked at Asn112. Residues Asp143, Val144, Asn145, Asp146, and Asn147 each contribute to the Ca(2+) site. The N-linked (GlcNAc...) asparagine glycan is linked to Asn157. 4 residues coordinate Ca(2+): Asp177, Asp179, His186, and Asp231. Residue Asn362 is glycosylated (N-linked (GlcNAc...) asparagine). N-linked (GlcNAc...) (complex) asparagine glycosylation occurs at Asn442. N-linked (GlcNAc...) asparagine glycosylation is found at Asn523 and Asn535. A helical membrane pass occupies residues 600 to 620 (AVVAILLCILTITVITLLIFL). The required for interaction with PALS1 stretch occupies residues 621–660 (RRRLRKQARAHGKSVPEIHEQLVTYDEEGGGEMDTTSYDV). Over 621-784 (RRRLRKQARA…GSDPREELLY (164 aa)) the chain is Cytoplasmic.

Part of a complex composed of AMOTL2, MAGI1 and CDH5, within the complex AMOTL2 acts as a scaffold protein for the interaction of MAGI1 with CDH5. The complex is required for coupling actin fibers to cell junctions in endothelial cells. Within the complex AMOTL2 (via its N-terminus) interacts with CDH5. Interacts (via cadherin 5 domain) with PTPRB. Interacts with TRPC4. Interacts with KRIT1. Interacts with PARD3. Interacts with RTN4 (isoform B). Interacts with PALS1; the interaction promotes PALS1 localization to cell junctions and is required for CDH5-mediated vascular lumen formation and endothelial cell. Interacts with CTNND1/p120-catenin; the interaction controls CADH5 endocytosis. Phosphorylated on tyrosine residues by KDR/VEGFR-2. Dephosphorylated by PTPRB. Post-translationally, O-glycosylated. In terms of tissue distribution, expressed in endothelial cells (at protein level). Expressed in the brain.

It localises to the cell junction. The protein localises to the adherens junction. It is found in the cell membrane. Its subcellular location is the cytoplasm. Its function is as follows. Cadherins are calcium-dependent cell adhesion proteins. They preferentially interact with themselves in a homophilic manner in connecting cells; cadherins may thus contribute to the sorting of heterogeneous cell types. This cadherin may play a important role in endothelial cell biology through control of the cohesion and organization of the intercellular junctions. It associates with alpha-catenin forming a link to the cytoskeleton. Plays a role in coupling actin fibers to cell junctions in endothelial cells, via acting as a cell junctional complex anchor for AMOTL2 and MAGI1. Acts in concert with KRIT1 and PALS1 to establish and maintain correct endothelial cell polarity and vascular lumen. These effects are mediated by recruitment and activation of the Par polarity complex and RAP1B. Required for activation of PRKCZ and for the localization of phosphorylated PRKCZ, PARD3, TIAM1 and RAP1B to the cell junction. Associates with CTNND1/p120-catenin to control CADH5 endocytosis. In Homo sapiens (Human), this protein is Cadherin-5.